A 122-amino-acid chain; its full sequence is Large ribosomal subunit protein uL14 (122 aa).

This sequence belongs to the universal ribosomal protein uL14 family. In terms of assembly, part of the 50S ribosomal subunit. Forms a cluster with proteins L3 and L19. In the 70S ribosome, L14 and L19 interact and together make contacts with the 16S rRNA in bridges B5 and B8.

In terms of biological role, binds to 23S rRNA. Forms part of two intersubunit bridges in the 70S ribosome. The polypeptide is Large ribosomal subunit protein uL14 (Rhodococcus erythropolis (strain PR4 / NBRC 100887)).